Here is a 198-residue protein sequence, read N- to C-terminus: Probable opine utilization operon repressor (198 aa).

The protein operates within opine metabolism; mannopine biosynthesis [regulation]. In terms of biological role, possible repressor for genes for mannityl-opine utilization and / or plasmid conjugative transfer. This is Probable opine utilization operon repressor (opnR) from Rhizobium rhizogenes (Agrobacterium rhizogenes).